Consider the following 189-residue polypeptide: Transcriptional repressor NrdR (189 aa).

The segment at 3–34 (CPFCRGDDSRVVDSREVEDGQAIRRRRSCSGC) is a zinc-finger region. The ATP-cone domain maps to 46-136 (LSVVKRSGVT…VYRAFSSVED (91 aa)). The disordered stretch occupies residues 152–189 (RLPEGPEAAQGGPESKAGNGQAAGSGDPEGVKAEKSSE). The span at 180–189 (EGVKAEKSSE) shows a compositional bias: basic and acidic residues.

This sequence belongs to the NrdR family. Requires Zn(2+) as cofactor.

Functionally, negatively regulates transcription of bacterial ribonucleotide reductase nrd genes and operons by binding to NrdR-boxes. This Saccharopolyspora erythraea (strain ATCC 11635 / DSM 40517 / JCM 4748 / NBRC 13426 / NCIMB 8594 / NRRL 2338) protein is Transcriptional repressor NrdR.